We begin with the raw amino-acid sequence, 146 residues long: Probable glycine cleavage system H protein 1, mitochondrial (146 aa).

The transit peptide at 1-30 directs the protein to the mitochondrion; that stretch reads MLKTLRFGTRAFGQNLNIAKRNFCTRYTND. Positions 41 to 123 constitute a Lipoyl-binding domain; it reads NYRLGITDFA…MGDGWIVEYK (83 aa). Position 82 is an N6-lipoyllysine (Lys-82).

The protein belongs to the GcvH family. As to quaternary structure, the glycine cleavage system is composed of four proteins: P, T, L and H. (R)-lipoate serves as cofactor.

It localises to the mitochondrion. In terms of biological role, the glycine cleavage system catalyzes the degradation of glycine. The H protein shuttles the methylamine group of glycine from the P protein to the T protein. This Dictyostelium discoideum (Social amoeba) protein is Probable glycine cleavage system H protein 1, mitochondrial (gcvH1).